The following is a 578-amino-acid chain: 2-succinyl-5-enolpyruvyl-6-hydroxy-3-cyclohexene-1-carboxylate synthase (578 aa).

The protein belongs to the TPP enzyme family. MenD subfamily. Homodimer. Requires Mg(2+) as cofactor. Mn(2+) is required as a cofactor. The cofactor is thiamine diphosphate.

It carries out the reaction isochorismate + 2-oxoglutarate + H(+) = 5-enolpyruvoyl-6-hydroxy-2-succinyl-cyclohex-3-ene-1-carboxylate + CO2. It functions in the pathway quinol/quinone metabolism; 1,4-dihydroxy-2-naphthoate biosynthesis; 1,4-dihydroxy-2-naphthoate from chorismate: step 2/7. Its pathway is quinol/quinone metabolism; menaquinone biosynthesis. Its function is as follows. Catalyzes the thiamine diphosphate-dependent decarboxylation of 2-oxoglutarate and the subsequent addition of the resulting succinic semialdehyde-thiamine pyrophosphate anion to isochorismate to yield 2-succinyl-5-enolpyruvyl-6-hydroxy-3-cyclohexene-1-carboxylate (SEPHCHC). The protein is 2-succinyl-5-enolpyruvyl-6-hydroxy-3-cyclohexene-1-carboxylate synthase of Prosthecochloris aestuarii (strain DSM 271 / SK 413).